The primary structure comprises 122 residues: U7 snRNA-associated Sm-like protein LSm10 (122 aa).

Positions 16-88 constitute a Sm domain; that stretch reads SLIILLQGLQ…VRYVHIPDGV (73 aa).

Belongs to the snRNP Sm proteins family. As to quaternary structure, component of the heptameric ring U7 snRNP complex, or U7 Sm protein core complex, at least composed of LSM10, LSM11, SNRPB, SNRPD3, SNRPE, SNRPF, SNRPG and U7 snRNA. Formation of the U7 snRNP is an ATP-dependent process mediated by a specialized SMN complex containing at least the Sm protein core complex and additionally, the U7-specific LSM10 and LSM11 proteins. Interacts with CLNS1A and SMN. Post-translationally, not methylated. Methylation is not necessary for interaction with SMN.

The protein localises to the nucleus. In terms of biological role, appears to function in the U7 snRNP complex that is involved in histone 3'-end processing. Increases U7 snRNA levels but not histone 3'-end pre-mRNA processing activity, when overexpressed. Required for cell cycle progression from G1 to S phases. Binds specifically to U7 snRNA. Binds to the downstream cleavage product (DCP) of histone pre-mRNA. This Mus musculus (Mouse) protein is U7 snRNA-associated Sm-like protein LSm10 (Lsm10).